A 296-amino-acid polypeptide reads, in one-letter code: Iron(3+)-hydroxamate-binding protein FhuD (296 aa).

A signal peptide (tat-type signal) is located at residues M1–A30. One can recognise a Fe/B12 periplasmic-binding domain in the interval R37 to A296. Residues W68, R84, S103, Y106, F124, W217, W273, F274, and Y275 each contribute to the Fe(III)-coprogen site.

It belongs to the bacterial solute-binding protein 8 family. The complex is composed of two ATP-binding proteins (FhuC), a transmembrane protein (FhuB) and a solute-binding protein (FhuD). FhuD interacts with FhuB. Substrate-loaded FhuD binds FhuB more strongly than FhuD alone. In terms of processing, exported by the Tat system. The position of the signal peptide cleavage has been experimentally proven. Can also be exported by the Sec system.

It localises to the periplasm. Functionally, part of the ABC transporter complex FhuCDB involved in iron(3+)-hydroxamate import. Binds the iron(3+)-hydroxamate complex and transfers it to the membrane-bound permease. Required for the transport of all iron(3+)-hydroxamate siderophores such as ferrichrome, gallichrome, desferrioxamine, coprogen, aerobactin, shizokinen, rhodotorulic acid and the antibiotic albomycin. This chain is Iron(3+)-hydroxamate-binding protein FhuD (fhuD), found in Escherichia coli (strain K12).